A 723-amino-acid polypeptide reads, in one-letter code: Host cell factor 2 (723 aa).

4 Kelch repeats span residues 34–79, 83–130, 207–255, and 257–305; these read LMII…GFVC, RILV…RLGH, KMYV…VIGN, and MYIF…DSQE. Fibronectin type-III domains are found at residues 357 to 436, 516 to 606, and 608 to 720; these read PPAP…ANCT, TPSN…TCIP, and FPGA…SKKA. Positions 398 to 472 are disordered; the sequence is AASPDASAAP…VALHSPLAPN (75 aa). The segment covering 419–433 has biased composition (polar residues); sequence QGSNSILHNSVSDPA.

In terms of assembly, binds KMT2A/MLL1. Component of the MLL1/MLL complex, at least composed of KMT2A/MLL1, ASH2L, RBBP5, DPY30, WDR5, MEN1, HCFC1 and HCFC2. Interacts with TASOR.

The protein resides in the cytoplasm. It is found in the nucleus. The chain is Host cell factor 2 (Hcfc2) from Rattus norvegicus (Rat).